The chain runs to 235 residues: Probable ribonuclease P protein subunit 3 (235 aa).

The protein belongs to the eukaryotic/archaeal RNase P protein component 3 family.

Its subcellular location is the nucleus. The catalysed reaction is Endonucleolytic cleavage of RNA, removing 5'-extranucleotides from tRNA precursor.. Functionally, part of ribonuclease P, a protein complex that generates mature tRNA molecules by cleaving their 5'-ends. The sequence is that of Probable ribonuclease P protein subunit 3 from Schizosaccharomyces pombe (strain 972 / ATCC 24843) (Fission yeast).